We begin with the raw amino-acid sequence, 151 residues long: UPF0178 protein Pfl01_5469 (151 aa).

Belongs to the UPF0178 family.

The sequence is that of UPF0178 protein Pfl01_5469 from Pseudomonas fluorescens (strain Pf0-1).